A 208-amino-acid chain; its full sequence is Small ribosomal subunit protein uS4 (208 aa).

Residues 98–158 enclose the S4 RNA-binding domain; sequence SRLDNAVYRL…EKSRNMQVID (61 aa).

It belongs to the universal ribosomal protein uS4 family. In terms of assembly, part of the 30S ribosomal subunit. Contacts protein S5. The interaction surface between S4 and S5 is involved in control of translational fidelity.

In terms of biological role, one of the primary rRNA binding proteins, it binds directly to 16S rRNA where it nucleates assembly of the body of the 30S subunit. Its function is as follows. With S5 and S12 plays an important role in translational accuracy. The chain is Small ribosomal subunit protein uS4 from Desulfosudis oleivorans (strain DSM 6200 / JCM 39069 / Hxd3) (Desulfococcus oleovorans).